The sequence spans 253 residues: Chitooligosaccharide deacetylase (253 aa).

The Mg(2+) site is built by His-61 and His-126.

This sequence belongs to the YdjC deacetylase family. ChbG subfamily. Homodimer. Mg(2+) is required as a cofactor.

The protein resides in the cytoplasm. The catalysed reaction is N,N'-diacetylchitobiose + H2O = N-acetyl-beta-D-glucosaminyl-(1-&gt;4)-D-glucosamine + acetate. It carries out the reaction diacetylchitobiose-6'-phosphate + H2O = N'-monoacetylchitobiose-6'-phosphate + acetate. Its pathway is glycan degradation; chitin degradation. Involved in the degradation of chitin. ChbG is essential for growth on the acetylated chitooligosaccharides chitobiose and chitotriose but is dispensable for growth on cellobiose and chitosan dimer, the deacetylated form of chitobiose. Deacetylation of chitobiose-6-P and chitotriose-6-P is necessary for both the activation of the chb promoter by the regulatory protein ChbR and the hydrolysis of phosphorylated beta-glucosides by the phospho-beta-glucosidase ChbF. Catalyzes the removal of only one acetyl group from chitobiose-6-P to yield monoacetylchitobiose-6-P, the inducer of ChbR and the substrate of ChbF. This Yersinia pseudotuberculosis serotype O:1b (strain IP 31758) protein is Chitooligosaccharide deacetylase.